Reading from the N-terminus, the 400-residue chain is Acetate kinase (400 aa).

Residue asparagine 7 coordinates Mg(2+). Lysine 14 provides a ligand contact to ATP. A substrate-binding site is contributed by arginine 91. Residue aspartate 148 is the Proton donor/acceptor of the active site. Residues 208–212 (HIGNG), 283–285 (DFR), and 332–336 (GIGEH) each bind ATP. Glutamate 387 serves as a coordination point for Mg(2+).

Belongs to the acetokinase family. In terms of assembly, homodimer. Mg(2+) serves as cofactor. Mn(2+) is required as a cofactor.

Its subcellular location is the cytoplasm. The enzyme catalyses acetate + ATP = acetyl phosphate + ADP. The protein operates within metabolic intermediate biosynthesis; acetyl-CoA biosynthesis; acetyl-CoA from acetate: step 1/2. Functionally, catalyzes the formation of acetyl phosphate from acetate and ATP. Can also catalyze the reverse reaction. The chain is Acetate kinase from Clostridium beijerinckii (strain ATCC 51743 / NCIMB 8052) (Clostridium acetobutylicum).